A 290-amino-acid chain; its full sequence is 4-hydroxy-tetrahydrodipicolinate synthase (290 aa).

Position 44 (Thr-44) interacts with pyruvate. Catalysis depends on Tyr-132, which acts as the Proton donor/acceptor. Lys-160 (schiff-base intermediate with substrate) is an active-site residue. Ile-202 contributes to the pyruvate binding site.

The protein belongs to the DapA family. As to quaternary structure, homotetramer; dimer of dimers.

It localises to the cytoplasm. The enzyme catalyses L-aspartate 4-semialdehyde + pyruvate = (2S,4S)-4-hydroxy-2,3,4,5-tetrahydrodipicolinate + H2O + H(+). It participates in amino-acid biosynthesis; L-lysine biosynthesis via DAP pathway; (S)-tetrahydrodipicolinate from L-aspartate: step 3/4. Its function is as follows. Catalyzes the condensation of (S)-aspartate-beta-semialdehyde [(S)-ASA] and pyruvate to 4-hydroxy-tetrahydrodipicolinate (HTPA). This is 4-hydroxy-tetrahydrodipicolinate synthase from Legionella pneumophila (strain Corby).